A 705-amino-acid chain; its full sequence is Lethal(3)malignant brain tumor-like protein 2 (705 aa).

The tract at residues 1-84 (MEKPPSIEET…GTPRSLDGSG (84 aa)) is disordered. The residue at position 13 (serine 13) is a Phosphoserine. Acidic residues predominate over residues 15–25 (PMEEEEDDDLE). The segment covering 38 to 49 (SSVGSESSSYLE) has biased composition (low complexity). Over residues 50–60 (ESSEAENEDRE) the composition is skewed to acidic residues. A Phosphoserine modification is found at serine 67. Position 76 is a phosphothreonine (threonine 76). The FCS-type zinc-finger motif lies at 81–116 (DGSGSEPAVCEMCGIVGTREAFFSKTKRFCSVSCSR). Positions 90, 93, 110, and 114 each coordinate Zn(2+). 4 MBT repeats span residues 179 to 283 (FDWG…LVPP), 291 to 391 (TDWK…IKMS), 397 to 500 (MAHH…LTPP), and 508 to 604 (FNWE…LQPP). Serine 338 carries the post-translational modification Phosphoserine. A Glycyl lysine isopeptide (Lys-Gly) (interchain with G-Cter in SUMO2) cross-link involves residue lysine 405. Positions 608–705 (EPATPLKAKE…VENIKQETDD (98 aa)) are disordered. Positions 619 to 634 (TKKKKKQFGKKRKRIP) are enriched in basic residues. Residues lysine 647, lysine 659, and lysine 675 each participate in a glycyl lysine isopeptide (Lys-Gly) (interchain with G-Cter in SUMO2) cross-link. 3 positions are modified to phosphoserine: serine 683, serine 688, and serine 689. A Glycyl lysine isopeptide (Lys-Gly) (interchain with G-Cter in SUMO1); alternate cross-link involves residue lysine 700. A Glycyl lysine isopeptide (Lys-Gly) (interchain with G-Cter in SUMO2); alternate cross-link involves residue lysine 700.

As to quaternary structure, part of the E2F6.com-1 complex in G0 phase composed of E2F6, MGA, MAX, TFDP1, CBX3, BAT8, EUHMTASE1, RING1, RNF2, MBLR, BAT8 and YAF2.

It is found in the nucleus. Putative Polycomb group (PcG) protein. PcG proteins maintain the transcriptionally repressive state of genes, probably via a modification of chromatin, rendering it heritably changed in its expressibility. Its association with a chromatin-remodeling complex suggests that it may contribute to prevent expression of genes that trigger the cell into mitosis. Binds to monomethylated and dimethylated 'Lys-20' on histone H4. Binds histone H3 peptides that are monomethylated or dimethylated on 'Lys-4', 'Lys-9' or 'Lys-27'. The protein is Lethal(3)malignant brain tumor-like protein 2 (L3MBTL2) of Pongo abelii (Sumatran orangutan).